Reading from the N-terminus, the 40-residue chain is Beta/delta-ctenitoxin-Pr1a (40 aa).

Intrachain disulfides connect C1/C15, C8/C21, C14/C31, and C23/C29.

This sequence belongs to the neurotoxin 03 (Tx2) family. 05 subfamily. In terms of tissue distribution, expressed by the venom gland.

Its subcellular location is the secreted. Potent insecticidal toxin that binds to two distinct sites in insect sodium channels, with close affinity (Kd1=34.7 pM and Kd2=35.1 pM). Its association is rather fast (1.4 and 8.5 minutes, respectively for sites 1 and 2) and its dissociation is a slower process (5.4 and 32.8 minutes, respectively). On rat brain synaptosomes the toxin partially competes (~30%) with the beta-toxin CssIV, but does not compete with the alpha-toxin AaII, nor with the beta-toxin Ts VII. On cockroach nerve cord synaptosomes, the toxin does not compete with the anti-insect toxin LqqIT1, but it competes with the 'alpha-like' toxin BomIV (IC(50)=80 pM). In cockroach neurons, the toxin inhibits the inactivation of sodium channels and it shifts the sodium channel activation to hyperpolarizing potentials. Hence, it behaves like an 'alpha-like' toxin and binds preferentially to site 3 on the insect Nav channel, located on the domain IV. The toxin may also inhibit the N-methyl-D-aspartate (NMDA)-subtype of ionotropic glutamate receptor (GRIN). In vivo, the toxin causes excitatory effects on insects. This Phoneutria reidyi (Brazilian Amazonian armed spider) protein is Beta/delta-ctenitoxin-Pr1a.